The sequence spans 253 residues: tRNA pseudouridine synthase A (253 aa).

The Nucleophile role is filled by Asp-51. Substrate is bound at residue Tyr-110.

The protein belongs to the tRNA pseudouridine synthase TruA family. As to quaternary structure, homodimer.

The catalysed reaction is uridine(38/39/40) in tRNA = pseudouridine(38/39/40) in tRNA. Functionally, formation of pseudouridine at positions 38, 39 and 40 in the anticodon stem and loop of transfer RNAs. This chain is tRNA pseudouridine synthase A, found in Wolinella succinogenes (strain ATCC 29543 / DSM 1740 / CCUG 13145 / JCM 31913 / LMG 7466 / NCTC 11488 / FDC 602W) (Vibrio succinogenes).